We begin with the raw amino-acid sequence, 1422 residues long: DNA-directed RNA polymerase subunit beta (1422 aa).

The interval 1392 to 1422 is disordered; sequence QAAREAAERDLGGGPLGAPRGAVASGEKSSA.

The protein belongs to the RNA polymerase beta chain family. The RNAP catalytic core consists of 2 alpha, 1 beta, 1 beta' and 1 omega subunit. When a sigma factor is associated with the core the holoenzyme is formed, which can initiate transcription.

The enzyme catalyses RNA(n) + a ribonucleoside 5'-triphosphate = RNA(n+1) + diphosphate. Its function is as follows. DNA-dependent RNA polymerase catalyzes the transcription of DNA into RNA using the four ribonucleoside triphosphates as substrates. This chain is DNA-directed RNA polymerase subunit beta, found in Anaeromyxobacter dehalogenans (strain 2CP-1 / ATCC BAA-258).